The chain runs to 429 residues: Histidine--tRNA ligase (429 aa).

The protein belongs to the class-II aminoacyl-tRNA synthetase family. Homodimer.

The protein resides in the cytoplasm. It carries out the reaction tRNA(His) + L-histidine + ATP = L-histidyl-tRNA(His) + AMP + diphosphate + H(+). This is Histidine--tRNA ligase from Pseudomonas savastanoi pv. phaseolicola (strain 1448A / Race 6) (Pseudomonas syringae pv. phaseolicola (strain 1448A / Race 6)).